The following is a 270-amino-acid chain: Putative pyruvate, phosphate dikinase regulatory protein (270 aa).

149–156 (GVSRTSKT) contributes to the ADP binding site.

It belongs to the pyruvate, phosphate/water dikinase regulatory protein family. PDRP subfamily.

The catalysed reaction is N(tele)-phospho-L-histidyl/L-threonyl-[pyruvate, phosphate dikinase] + ADP = N(tele)-phospho-L-histidyl/O-phospho-L-threonyl-[pyruvate, phosphate dikinase] + AMP + H(+). It catalyses the reaction N(tele)-phospho-L-histidyl/O-phospho-L-threonyl-[pyruvate, phosphate dikinase] + phosphate + H(+) = N(tele)-phospho-L-histidyl/L-threonyl-[pyruvate, phosphate dikinase] + diphosphate. Functionally, bifunctional serine/threonine kinase and phosphorylase involved in the regulation of the pyruvate, phosphate dikinase (PPDK) by catalyzing its phosphorylation/dephosphorylation. This chain is Putative pyruvate, phosphate dikinase regulatory protein, found in Sphingopyxis alaskensis (strain DSM 13593 / LMG 18877 / RB2256) (Sphingomonas alaskensis).